The primary structure comprises 56 residues: Stable protein 1 (56 aa).

The Stress-response A/B barrel domain occupies 1-44 (GYTHAFESTFESKSGLQEYLDSAALAAFAEGFLPTLSQRSFNWG).

The protein is Stable protein 1 of Populus euphratica (Euphrates poplar).